A 608-amino-acid chain; its full sequence is Probable methyltransferase PMT3 (608 aa).

Topologically, residues 1-12 are cytoplasmic; sequence MKGRSDGGQKKR. A helical; Signal-anchor for type II membrane protein transmembrane segment spans residues 13–33; it reads VIALVCVAAVVLVFVYLFYGS. Topologically, residues 34 to 608 are lumenal; it reads SDHRASAIEY…LTSESLRDME (575 aa). N-linked (GlcNAc...) asparagine glycosylation occurs at Asn-342.

The protein belongs to the methyltransferase superfamily.

It is found in the golgi apparatus membrane. This Arabidopsis thaliana (Mouse-ear cress) protein is Probable methyltransferase PMT3.